A 445-amino-acid chain; its full sequence is Scarecrow-like protein 18 (445 aa).

The segment covering 1–21 (MLTSFKSSSSSSEDATATTTE) has biased composition (low complexity). A disordered region spans residues 1 to 26 (MLTSFKSSSSSSEDATATTTENPPPL). The 414-residue stretch at 32 to 445 (SAATSASHHL…RPLFSVSSWK (414 aa)) folds into the GRAS domain. The segment at 39–127 (HHLRRLLFTA…STVFTSSVCK (89 aa)) is leucine repeat I (LRI). The interval 146-217 (YLWLNQLTPF…SPPPSLRITG (72 aa)) is VHIID. A VHIID motif is present at residues 179 to 183 (LHILD). The tract at residues 227-259 (RTGDRLTRFADSLGLQFQFHTLVIVEEDLAGLL) is leucine repeat II (LRII). Residues 275–366 (IAVNCVHFLH…QRWFGKEILD (92 aa)) are PFYRE. Residues 369 to 445 (AAEETERKQR…RPLFSVSSWK (77 aa)) are SAW.

It belongs to the GRAS family. In terms of tissue distribution, expressed in roots and flowers.

Its subcellular location is the nucleus. In terms of biological role, probable transcription factor required for axillary (lateral) shoot meristem formation during vegetative development. Seems to act upstream of REVOLUTA. The chain is Scarecrow-like protein 18 (SCL18) from Arabidopsis thaliana (Mouse-ear cress).